Reading from the N-terminus, the 591-residue chain is DDB1- and CUL4-associated factor 8 (591 aa).

Residues 1–25 (MSNKRPNTTDGRTDLANGSLSSSPE) show a composition bias toward polar residues. The interval 1 to 140 (MSNKRPNTTD…EDWVSSETTA (140 aa)) is disordered. Serine 22 and serine 23 each carry phosphoserine. The Nuclear export signal motif lies at 40–51 (IEVEASDLSLSL). Basic and acidic residues-rich tracts occupy residues 66–100 (RGTD…HGHS) and 118–131 (SRDQ…RALE). Residues serine 100, serine 123, and serine 124 each carry the phosphoserine modification. 7 WD repeats span residues 185 to 224 (GHTG…PVLD), 228 to 269 (GHKS…CCKN), 275 to 315 (QHKG…PASK), 323 to 363 (EKKV…ENEN), 379 to 418 (ESKA…GAQY), 426 to 466 (RNNA…IIQF), and 470 to 509 (DKGG…STEL). Residue arginine 198 is modified to Omega-N-methylarginine; by PRMT1. A disordered region spans residues 552 to 591 (HRRWREPGVGATDADSDESPSSSDTSDEEEGPDRVQCMPS).

The protein belongs to the WD repeat DCAF8 family. In terms of assembly, interacts with DDB1, CUL4A and CUL4B. Interacts with KPNA1, KPNB1 and XPO1. As to expression, expressed in the brain.

The protein localises to the nucleus. It is found in the cytoplasm. Its pathway is protein modification; protein ubiquitination. Its function is as follows. May function as a substrate receptor for CUL4-DDB1 E3 ubiquitin-protein ligase complex. This is DDB1- and CUL4-associated factor 8 (Dcaf8) from Mus musculus (Mouse).